The following is a 99-amino-acid chain: Small ribosomal subunit protein uS14m (99 aa).

It belongs to the universal ribosomal protein uS14 family.

It is found in the mitochondrion. This is Small ribosomal subunit protein uS14m (RPS14) from Oenothera berteroana (Bertero's evening primrose).